Reading from the N-terminus, the 326-residue chain is Vitamin B12 import system permease protein BtuC (326 aa).

Transmembrane regions (helical) follow at residues 15-35 (WLLC…CAGE), 61-81 (LAVL…QALF), 88-108 (PGLL…VLLG), 112-132 (LPNW…TLIL), 146-166 (LLAG…AIYF), 184-204 (GGVD…LLWI), 240-260 (GWMV…GLVI), 274-294 (VLLP…DIVA), and 302-322 (ELPI…WLLL).

It belongs to the binding-protein-dependent transport system permease family. FecCD subfamily. In terms of assembly, the complex is composed of two ATP-binding proteins (BtuD), two transmembrane proteins (BtuC) and a solute-binding protein (BtuF).

The protein resides in the cell inner membrane. Its function is as follows. Part of the ABC transporter complex BtuCDF involved in vitamin B12 import. Involved in the translocation of the substrate across the membrane. In Shigella sonnei (strain Ss046), this protein is Vitamin B12 import system permease protein BtuC.